The sequence spans 318 residues: Olfactory receptor 5G25 (318 aa).

At 1-25 the chain is on the extracellular side; the sequence is MMHRNQTVVTEFFFTGLTSSFHLQI. N5 carries N-linked (GlcNAc...) asparagine glycosylation. A helical membrane pass occupies residues 26–46; the sequence is VLFLTFLCVYLATLLGNLGMI. Topologically, residues 47–54 are cytoplasmic; sequence ILIHQDTR. Residues 55–75 traverse the membrane as a helical segment; the sequence is LHIPMYFFLSHLSFVDACSSS. Residues 76-99 are Extracellular-facing; that stretch reads VISPKMLSDIFVDKKVISFLGCAI. An intrachain disulfide couples C97 to C189. Residues 100–120 form a helical membrane-spanning segment; sequence QFCLFSQFVVTECFLLASMAY. Over 121–133 the chain is Cytoplasmic; sequence DRYVAICKPLLYT. Residues 134 to 154 traverse the membrane as a helical segment; that stretch reads LIMSQRVCVQLVIGPYSIGLI. Over 155–196 the chain is Extracellular; it reads STVVHTTSAFILPYCGPNLINHFFCDLLPVLSLACADTQMNK. The helical transmembrane segment at 197–217 threads the bilayer; the sequence is HLLFIMAGILGVFSGIIILVS. The Cytoplasmic portion of the chain corresponds to 218–237; that stretch reads YVYIAITILKINSADGRRKA. The helical transmembrane segment at 238 to 258 threads the bilayer; the sequence is FSTCSSHLTAVSILYGTLFFI. Residues 259–271 lie on the Extracellular side of the membrane; sequence YVRPSSSFSLDIN. A helical transmembrane segment spans residues 272–292; the sequence is KVVSLFYTAVIPMLNPFIYSL. Topologically, residues 293–318 are cytoplasmic; sequence RNKEVKDALIRTFEKKFCYSLQDKIL.

The protein belongs to the G-protein coupled receptor 1 family.

It localises to the cell membrane. Functionally, potential odorant receptor. The chain is Olfactory receptor 5G25 from Mus musculus (Mouse).